The following is a 471-amino-acid chain: Fructokinase-like 1, chloroplastic (471 aa).

A chloroplast-targeting transit peptide spans 1–38; the sequence is MASLLIFPHLHHFDSSLDRREVLVVRHSQASRRFLTPK. A disordered region spans residues 36 to 85; that stretch reads TPKASINGSGITNGAAAETTSKPSRKGRKKKQTSTVIEKDNTETDPELNP. The span at 39 to 57 shows a compositional bias: polar residues; that stretch reads ASINGSGITNGAAAETTSK. Residues 58–67 are compositionally biased toward basic residues; that stretch reads PSRKGRKKKQ.

This sequence belongs to the carbohydrate kinase PfkB family. In terms of assembly, interacts with CITRX/TRXz. Interacts with PTAC7. Self-interacts. Binds to FLN2. Associates with the plastid-encoded RNA polymerase (PEP) complex.

It localises to the plastid. The protein localises to the chloroplast. Its function is as follows. Required for proper chloroplast development, most likely through regulating plastid-encoded polymerase (PEP) dependent chloroplast transcription. Acts as a component of the transcriptionally active plastid chromosome that is required for plastid gene expression. The sequence is that of Fructokinase-like 1, chloroplastic from Arabidopsis thaliana (Mouse-ear cress).